Reading from the N-terminus, the 89-residue chain is Large ribosomal subunit protein bL27 (89 aa).

A disordered region spans residues 1-22 (MAHKKGTGSTRNGRDSNAQRLG). The segment covering 7-19 (TGSTRNGRDSNAQ) has biased composition (polar residues).

This sequence belongs to the bacterial ribosomal protein bL27 family.

The sequence is that of Large ribosomal subunit protein bL27 from Cyanothece sp. (strain PCC 7425 / ATCC 29141).